We begin with the raw amino-acid sequence, 688 residues long: Potassium-transporting ATPase ATP-binding subunit (688 aa).

4 helical membrane-spanning segments follow: residues 34–54 (PVMF…LDIL), 62–82 (AMFT…ANMA), 219–239 (VALT…TATL), and 260–280 (VLVA…LSAI). Asp-313 serves as the catalytic 4-aspartylphosphate intermediate. ATP-binding positions include Asp-350, Glu-354, 383–390 (FSAQTRMS), and Lys-401. Mg(2+)-binding residues include Asp-524 and Asp-528. 3 helical membrane-spanning segments follow: residues 594-614 (FAII…LNIM), 622-642 (AILS…PLAL), and 662-682 (IYGL…DLLL).

The protein belongs to the cation transport ATPase (P-type) (TC 3.A.3) family. Type IA subfamily. In terms of assembly, the system is composed of three essential subunits: KdpA, KdpB and KdpC.

Its subcellular location is the cell inner membrane. The enzyme catalyses K(+)(out) + ATP + H2O = K(+)(in) + ADP + phosphate + H(+). Its function is as follows. Part of the high-affinity ATP-driven potassium transport (or Kdp) system, which catalyzes the hydrolysis of ATP coupled with the electrogenic transport of potassium into the cytoplasm. This subunit is responsible for energy coupling to the transport system and for the release of the potassium ions to the cytoplasm. This is Potassium-transporting ATPase ATP-binding subunit from Yersinia pestis bv. Antiqua (strain Antiqua).